Consider the following 303-residue polypeptide: UDP-3-O-acyl-N-acetylglucosamine deacetylase (303 aa).

His77, His236, and Asp240 together coordinate Zn(2+). Catalysis depends on His263, which acts as the Proton donor.

It belongs to the LpxC family. Zn(2+) is required as a cofactor.

It catalyses the reaction a UDP-3-O-[(3R)-3-hydroxyacyl]-N-acetyl-alpha-D-glucosamine + H2O = a UDP-3-O-[(3R)-3-hydroxyacyl]-alpha-D-glucosamine + acetate. It functions in the pathway glycolipid biosynthesis; lipid IV(A) biosynthesis; lipid IV(A) from (3R)-3-hydroxytetradecanoyl-[acyl-carrier-protein] and UDP-N-acetyl-alpha-D-glucosamine: step 2/6. In terms of biological role, catalyzes the hydrolysis of UDP-3-O-myristoyl-N-acetylglucosamine to form UDP-3-O-myristoylglucosamine and acetate, the committed step in lipid A biosynthesis. The chain is UDP-3-O-acyl-N-acetylglucosamine deacetylase from Ruthia magnifica subsp. Calyptogena magnifica.